The sequence spans 263 residues: Tryptophan synthase alpha chain (263 aa).

Residues Glu-46 and Asp-57 each act as proton acceptor in the active site.

It belongs to the TrpA family. Tetramer of two alpha and two beta chains.

The enzyme catalyses (1S,2R)-1-C-(indol-3-yl)glycerol 3-phosphate + L-serine = D-glyceraldehyde 3-phosphate + L-tryptophan + H2O. It participates in amino-acid biosynthesis; L-tryptophan biosynthesis; L-tryptophan from chorismate: step 5/5. The alpha subunit is responsible for the aldol cleavage of indoleglycerol phosphate to indole and glyceraldehyde 3-phosphate. The chain is Tryptophan synthase alpha chain from Bacteroides fragilis (strain ATCC 25285 / DSM 2151 / CCUG 4856 / JCM 11019 / LMG 10263 / NCTC 9343 / Onslow / VPI 2553 / EN-2).